The sequence spans 1942 residues: Myosin-2 (1942 aa).

A Myosin N-terminal SH3-like domain is found at 33 to 82 (DAKTSVFVAEPKESFVKGTIQSKDAGKVTVKTEAGATLTVKEDQIFPMNP). A phosphothreonine mark is found at Thr64 and Thr69. In terms of domain architecture, Myosin motor spans 86-785 (DKIEDMAMMT…LLGLLEEMRD (700 aa)). 179–186 (GESGAGKT) provides a ligand contact to ATP. Tyr389 is subject to Phosphotyrosine. Phosphothreonine is present on Thr419. Ser625 carries the phosphoserine modification. Positions 662–684 (LNKLMTNLRSTHPHFVRCIIPNE) are actin-binding. Pros-methylhistidine is present on His760. Residues 788 to 817 (LAQLITRTQAMCRGFLARVEYQKMVERRES) form the IQ domain. A coiled-coil region spans residues 849–1930 (SAETEKEMAT…ESQVNKLRVK (1082 aa)). Phosphoserine occurs at positions 1095 and 1099. The tract at residues 1130–1175 (EAERASRAKAEKQRSDLSRELEEISERLEEAGGATSAQIEMNKKRE) is disordered. Basic and acidic residues predominate over residues 1131–1159 (AERASRAKAEKQRSDLSRELEEISERLEE). A phosphoserine mark is found at Ser1165 and Ser1240. The residue at position 1244 (Thr1244) is a Phosphothreonine. Ser1246 is subject to Phosphoserine. Thr1258 carries the post-translational modification Phosphothreonine. Position 1264 is a phosphoserine (Ser1264). Residue Thr1289 is modified to Phosphothreonine. Residues Ser1291, Ser1295, Ser1306, and Ser1309 each carry the phosphoserine modification. Tyr1467 carries the phosphotyrosine modification. At Thr1470 the chain carries Phosphothreonine. Position 1477 is a phosphoserine (Ser1477). Tyr1495 carries the post-translational modification Phosphotyrosine. Ser1498 bears the Phosphoserine mark. Thr1504 carries the post-translational modification Phosphothreonine. Ser1517 is modified (phosphoserine). Phosphothreonine is present on Thr1520. 6 positions are modified to phosphoserine: Ser1557, Ser1577, Ser1603, Ser1606, Ser1717, and Ser1729. A phosphothreonine mark is found at Thr1733 and Thr1739. At Ser1742 the chain carries Phosphoserine.

Belongs to the TRAFAC class myosin-kinesin ATPase superfamily. Myosin family. As to quaternary structure, muscle myosin is a hexameric protein that consists of 2 heavy chain subunits (MHC), 2 alkali light chain subunits (MLC) and 2 regulatory light chain subunits (MLC-2). Interacts with GCSAM. Expressed in type 2a myofibers in the tibialis anterior and soleus muscles (at protein level).

The protein resides in the cytoplasm. It localises to the myofibril. Its function is as follows. Myosins are actin-based motor molecules with ATPase activity essential for muscle contraction. This chain is Myosin-2, found in Mus musculus (Mouse).